The sequence spans 444 residues: Xaa-Pro dipeptidase (444 aa).

Residues aspartate 247, aspartate 258, histidine 340, glutamate 385, and glutamate 424 each coordinate Mn(2+).

It belongs to the peptidase M24B family. Bacterial-type prolidase subfamily. Requires Mn(2+) as cofactor.

The catalysed reaction is Xaa-L-Pro dipeptide + H2O = an L-alpha-amino acid + L-proline. In terms of biological role, splits dipeptides with a prolyl residue in the C-terminal position. The chain is Xaa-Pro dipeptidase from Proteus mirabilis (strain HI4320).